The chain runs to 831 residues: MSMARRDFIKQTAAAAAATVAGVPLTGYTQNIVTESEAAKLKWSKAPCRFCGTGCGVNVAVKDNQVVATHGDFNAEVNKGLNCVKGYFLSKIMYGSDRLTQPLLRIKDGKYAKDGEFAPVSWDQAFDVMAEQFKRVLKDKGPEAVGMFGSGQWTVWEGYAALKLMKAGFRTNNLDPNARHCMASAAVGFMRTFGADEPMGCYDDIENADAFVLWGSNMAEMHPILWTRVTDRRLSAPATKVAVLSTFEHRSYELADLTLTFEPQSDLAILNYIANHIIRTKRVNRDFVDKHTVFREGNADIGYGLRPEHPLQQAARNAGDAGGSKPITFDDFARFVSKYDLEYTAKLSGVPKNRLEELAELYADPKVRVTSFWTMGFNQHTRGVWCNNMVYNIHLLTGKISTPGNSPFSLTGQPSACGTAREVGTFSHRLPADLVVTNPEHRRHAEEIWKLPDGTIPSKVGAHAVLQNRMLKDGKINAYWVMVNNNMQAAANLMNEGLPGYRNPENFIVVSDAYPTVTTLSADLILPAAMWVEKEGAYGNAERRTQFWHQLVDAPGQARSDLWQLVEFSKRFKVEEVWPADLLAKKPEYRGKTLYDVLFANGKVNQFPNTELDPEYANQEAQAFGFYLQKGLFEEYAEFGRGHGHDLAPFDVYHKARGLRWPVVDGKETLWRYREGSDPYVKPGTGFQFYGNPDGKAVIFALPYEPPPEAPDKEYPFWLSTGRVLEHWHSGSMTRRVPELYKAFPEAVCFMHPDDAQALGVRRGVEVEVVSRRGKMRTRVETRGRDKPPRGLVFVPWFDAGQLINKVTLDATDPISFQTDFKKCAVKIVKV.

The tat-type signal signal peptide spans 1–38; it reads MSMARRDFIKQTAAAAAATVAGVPLTGYTQNIVTESEA. The 57-residue stretch at 41-97 folds into the 4Fe-4S Mo/W bis-MGD-type domain; that stretch reads LKWSKAPCRFCGTGCGVNVAVKDNQVVATHGDFNAEVNKGLNCVKGYFLSKIMYGSD. C48, C51, C55, and C83 together coordinate [4Fe-4S] cluster. Mo-bis(molybdopterin guanine dinucleotide) is bound by residues K85, Q152, N177, C181, 214 to 221, 245 to 249, 264 to 266, M375, Q379, N485, 511 to 512, K534, D561, and 721 to 730; these read WGSNMAEM, STFEH, QSD, SD, and TGRVLEHWHS. W797 contacts substrate. Mo-bis(molybdopterin guanine dinucleotide) is bound by residues N805 and K822.

Belongs to the prokaryotic molybdopterin-containing oxidoreductase family. NasA/NapA/NarB subfamily. As to quaternary structure, component of the periplasmic nitrate reductase NapAB complex composed of NapA and NapB. Requires [4Fe-4S] cluster as cofactor. Mo-bis(molybdopterin guanine dinucleotide) is required as a cofactor. In terms of processing, predicted to be exported by the Tat system. The position of the signal peptide cleavage has not been experimentally proven.

The protein resides in the periplasm. It catalyses the reaction 2 Fe(II)-[cytochrome] + nitrate + 2 H(+) = 2 Fe(III)-[cytochrome] + nitrite + H2O. Catalytic subunit of the periplasmic nitrate reductase complex NapAB. Receives electrons from NapB and catalyzes the reduction of nitrate to nitrite. This is Periplasmic nitrate reductase from Bordetella parapertussis (strain 12822 / ATCC BAA-587 / NCTC 13253).